Reading from the N-terminus, the 802-residue chain is Ribosome-releasing factor 2, mitochondrial (802 aa).

A tr-type G domain is found at 13-297 (KKIRNIGIIA…AVVDFLPSPA (285 aa)). GTP is bound by residues 22–29 (AHIDAGKT), 86–90 (DTPGH), and 140–143 (NKMD).

This sequence belongs to the TRAFAC class translation factor GTPase superfamily. Classic translation factor GTPase family. EF-G/EF-2 subfamily.

Its subcellular location is the mitochondrion. Functionally, mitochondrial GTPase that mediates the disassembly of ribosomes from messenger RNA at the termination of mitochondrial protein biosynthesis. Not involved in the GTP-dependent ribosomal translocation step during translation elongation. This chain is Ribosome-releasing factor 2, mitochondrial, found in Yarrowia lipolytica (strain CLIB 122 / E 150) (Yeast).